The following is a 263-amino-acid chain: uncharacterized protein (263 aa).

Positions 198 to 224 (KRSSDSFVSLKPGEDEHSPLEISTCGN) are disordered.

This is an uncharacterized protein from Saccharomyces cerevisiae (strain ATCC 204508 / S288c) (Baker's yeast).